The following is a 315-amino-acid chain: Ester hydrolase C11orf54 homolog (315 aa).

Histidine 266, histidine 268, and histidine 278 together coordinate Zn(2+).

In terms of assembly, monomer.

The protein localises to the nucleus. Exhibits ester hydrolase activity on the substrate p-nitrophenyl acetate. The chain is Ester hydrolase C11orf54 homolog from Bos taurus (Bovine).